Reading from the N-terminus, the 217-residue chain is Large ribosomal subunit protein uL4 (217 aa).

Residues 42 to 100 (RAAARQGTHSTKTRGDVSGGGRKPYRQKGTGRARQGSTRAPQFTGGGVVHGPKPRDYSQ) form a disordered region.

Belongs to the universal ribosomal protein uL4 family. Part of the 50S ribosomal subunit.

In terms of biological role, one of the primary rRNA binding proteins, this protein initially binds near the 5'-end of the 23S rRNA. It is important during the early stages of 50S assembly. It makes multiple contacts with different domains of the 23S rRNA in the assembled 50S subunit and ribosome. Functionally, forms part of the polypeptide exit tunnel. This is Large ribosomal subunit protein uL4 from Mycolicibacterium paratuberculosis (strain ATCC BAA-968 / K-10) (Mycobacterium paratuberculosis).